The primary structure comprises 344 residues: Aspartate-semialdehyde dehydrogenase (344 aa).

Residues 10 to 13 (TGQV) and 38 to 39 (RS) contribute to the NADP(+) site. Arg101 contributes to the phosphate binding site. The active-site Acyl-thioester intermediate is the Cys131. Residue Gln158 participates in substrate binding. NADP(+) is bound at residue 161-162 (SG). Phosphate is bound at residue Lys228. Arg250 serves as a coordination point for substrate. Catalysis depends on His257, which acts as the Proton acceptor. Asn326 serves as a coordination point for NADP(+).

This sequence belongs to the aspartate-semialdehyde dehydrogenase family. Homodimer.

It catalyses the reaction L-aspartate 4-semialdehyde + phosphate + NADP(+) = 4-phospho-L-aspartate + NADPH + H(+). Its pathway is amino-acid biosynthesis; L-lysine biosynthesis via DAP pathway; (S)-tetrahydrodipicolinate from L-aspartate: step 2/4. The protein operates within amino-acid biosynthesis; L-methionine biosynthesis via de novo pathway; L-homoserine from L-aspartate: step 2/3. It participates in amino-acid biosynthesis; L-threonine biosynthesis; L-threonine from L-aspartate: step 2/5. Functionally, catalyzes the NADPH-dependent formation of L-aspartate-semialdehyde (L-ASA) by the reductive dephosphorylation of L-aspartyl-4-phosphate. This Corynebacterium melassecola protein is Aspartate-semialdehyde dehydrogenase.